The following is a 132-amino-acid chain: MNALIREIEQAYMPKNFPEFRVGDTVRVHVKVKERNKERIQVFEGVVIRIKGSGTGKTFTVRKESYGVGIERIFPFACPSIDKVEVTKRGKVRRAKLYYLRERRGKAARIREIKEWEIRKRAEESKAAKENQ.

It belongs to the bacterial ribosomal protein bL19 family.

Functionally, this protein is located at the 30S-50S ribosomal subunit interface and may play a role in the structure and function of the aminoacyl-tRNA binding site. The sequence is that of Large ribosomal subunit protein bL19 from Persephonella marina (strain DSM 14350 / EX-H1).